Here is a 125-residue protein sequence, read N- to C-terminus: Testis-specific protein LINC02914 (125 aa).

Positions 1–12 are enriched in basic and acidic residues; the sequence is MHRKEPGARLEA. The tract at residues 1–45 is disordered; sequence MHRKEPGARLEATRGAARPHKQGTKPMITRPSVSQLGEGKCPSSQ.

As to expression, expressed in testes and ejaculated spermatozoa (at protein level).

The protein resides in the cytoplasm. The protein localises to the nucleus. Its subcellular location is the cell projection. It is found in the cilium. It localises to the flagellum. In terms of biological role, may play a role in the flagellum biology. The polypeptide is Testis-specific protein LINC02914 (Homo sapiens (Human)).